The primary structure comprises 834 residues: DNA-directed RNA polymerase subunit beta' (834 aa).

The segment covering 1 to 22 (MTYSNKPTGSSLRSSRNSTLEP) has biased composition (polar residues). The interval 1–45 (MTYSNKPTGSSLRSSRNSTLEPQSLVHREESKRQEGPKGQNLRIG) is disordered. Residues 26-36 (VHREESKRQEG) show a composition bias toward basic and acidic residues. Residues Cys-101, Cys-103, Cys-118, and Cys-121 each coordinate Zn(2+). Mg(2+)-binding residues include Asp-606, Asp-608, and Asp-610.

This sequence belongs to the RNA polymerase beta' chain family. RpoC1 subfamily. In terms of assembly, in plastids the minimal PEP RNA polymerase catalytic core is composed of four subunits: alpha, beta, beta', and beta''. When a (nuclear-encoded) sigma factor is associated with the core the holoenzyme is formed, which can initiate transcription. The cofactor is Mg(2+). It depends on Zn(2+) as a cofactor.

Its subcellular location is the plastid. The protein localises to the chloroplast. It catalyses the reaction RNA(n) + a ribonucleoside 5'-triphosphate = RNA(n+1) + diphosphate. DNA-dependent RNA polymerase catalyzes the transcription of DNA into RNA using the four ribonucleoside triphosphates as substrates. This chain is DNA-directed RNA polymerase subunit beta', found in Staurastrum punctulatum (Green alga).